The chain runs to 144 residues: Ribosomal RNA large subunit methyltransferase H (144 aa).

Residues L63, G92, and 111-116 (LSPLTF) each bind S-adenosyl-L-methionine.

Belongs to the RNA methyltransferase RlmH family. As to quaternary structure, homodimer.

The protein localises to the cytoplasm. It carries out the reaction pseudouridine(1915) in 23S rRNA + S-adenosyl-L-methionine = N(3)-methylpseudouridine(1915) in 23S rRNA + S-adenosyl-L-homocysteine + H(+). Specifically methylates the pseudouridine at position 1915 (m3Psi1915) in 23S rRNA. This Synechococcus sp. (strain CC9902) protein is Ribosomal RNA large subunit methyltransferase H.